Here is a 700-residue protein sequence, read N- to C-terminus: Hedgehog-interacting protein (700 aa).

Residues 1–17 (MLKMLSFKLLLLAVALG) form the signal peptide. N-linked (GlcNAc...) asparagine glycosylation occurs at Asn-99. 10 disulfides stabilise this stretch: Cys-216–Cys-536, Cys-218–Cys-543, Cys-402–Cys-624, Cys-435–Cys-452, Cys-500–Cys-594, Cys-612–Cys-623, Cys-625–Cys-634, Cys-639–Cys-649, Cys-643–Cys-655, and Cys-657–Cys-666. Residues 376-388 (LDDMEEMDGLSDF) form an interaction with SHH zinc binding site region. A Zn(2+)-binding site is contributed by Asp-383. N-linked (GlcNAc...) asparagine glycans are attached at residues Asn-416, Asn-447, and Asn-459. EGF-like domains lie at 607-634 (DCSR…GDFC) and 635-667 (RIAK…PQCE).

Belongs to the HHIP family. In terms of assembly, interacts with all three hedgehog family members, SHH, IHH and DHH. In terms of tissue distribution, in the adult brain, high expression found in the ventral cochlear nucleus, medial habenula, indusium griseum and tenia tecta. Some expression also in the caudate putamen, the nucleus accumbens, the ventral pallidum and in the superficial layers of the superior colliculus.

Its subcellular location is the cell membrane. The protein localises to the secreted. Its function is as follows. Modulates hedgehog signaling in several cell types, including brain and lung through direct interaction with members of the hedgehog family. Soluble forms inhibit Shh-induced differentiation in the fibroblast cell line C3H/10T1/2. This is Hedgehog-interacting protein (Hhip) from Mus musculus (Mouse).